Reading from the N-terminus, the 70-residue chain is MRAIISLLLISAMVFSIIEAVPEEEGLQLSEDERGGCLPHNRFCNALSDPRCCSGLRCKELSIWDSRCLG.

Positions 1–20 (MRAIISLLLISAMVFSIIEA) are cleaved as a signal peptide. A propeptide spanning residues 21–34 (VPEEEGLQLSEDER) is cleaved from the precursor. Disulfide bonds link C37-C53, C44-C58, and C52-C68. The residue at position 69 (L69) is a Leucine amide.

It belongs to the neurotoxin 01 (U2-agtx) family. In terms of tissue distribution, expressed by the venom gland.

The protein localises to the secreted. In terms of biological role, insect active toxin causing rapid but reversible paralysis in crickets. No activity shown in mammals. Does not show effect on mammalian voltage-gated calcium channels. This chain is U2-agatoxin-Ao1l, found in Agelena orientalis (Funnel-web spider).